A 43-amino-acid polypeptide reads, in one-letter code: Cytin chain A (43 aa).

Belongs to the protease inhibitor I13 (potato type I serine protease inhibitor) family. In terms of assembly, heterodimer of an A chain and a B chain, linked by a disulfide bond.

Its function is as follows. Inhibitor of chymotrypsin. This is Cytin chain A from Theromyzon tessulatum (Duck leech).